The primary structure comprises 795 residues: Phenylalanine--tRNA ligase beta subunit (795 aa).

Residues 39–148 (AGSFHGVVVG…ADAPIGTDIR (110 aa)) enclose the tRNA-binding domain. The B5 domain maps to 401-476 (PKRATITLRR…RVYGYNNIPD (76 aa)). The Mg(2+) site is built by Asp454, Asp460, Glu463, and Glu464. One can recognise an FDX-ACB domain in the interval 701-794 (SRFPANRRDI…LKERFQASLR (94 aa)).

This sequence belongs to the phenylalanyl-tRNA synthetase beta subunit family. Type 1 subfamily. Tetramer of two alpha and two beta subunits. The cofactor is Mg(2+).

It is found in the cytoplasm. The enzyme catalyses tRNA(Phe) + L-phenylalanine + ATP = L-phenylalanyl-tRNA(Phe) + AMP + diphosphate + H(+). The protein is Phenylalanine--tRNA ligase beta subunit of Shigella flexneri.